Reading from the N-terminus, the 360-residue chain is Peptide chain release factor 1 (360 aa).

N5-methylglutamine is present on Q235.

It belongs to the prokaryotic/mitochondrial release factor family. Methylated by PrmC. Methylation increases the termination efficiency of RF1.

The protein localises to the cytoplasm. Its function is as follows. Peptide chain release factor 1 directs the termination of translation in response to the peptide chain termination codons UAG and UAA. This is Peptide chain release factor 1 from Burkholderia multivorans (strain ATCC 17616 / 249).